A 341-amino-acid polypeptide reads, in one-letter code: Methionine import ATP-binding protein MetN (341 aa).

The ABC transporter domain occupies 9-247; the sequence is ISVEQLNKEI…PQSAITEELF (239 aa). An ATP-binding site is contributed by 41 to 48; that stretch reads GHSGSGKS.

It belongs to the ABC transporter superfamily. Methionine importer (TC 3.A.1.24) family. As to quaternary structure, the complex is composed of two ATP-binding proteins (MetN), two transmembrane proteins (MetI) and a solute-binding protein (MetQ).

The protein localises to the cell inner membrane. The enzyme catalyses L-methionine(out) + ATP + H2O = L-methionine(in) + ADP + phosphate + H(+). The catalysed reaction is D-methionine(out) + ATP + H2O = D-methionine(in) + ADP + phosphate + H(+). In terms of biological role, part of the ABC transporter complex MetNIQ involved in methionine import. Responsible for energy coupling to the transport system. The protein is Methionine import ATP-binding protein MetN of Chlamydia abortus (strain DSM 27085 / S26/3) (Chlamydophila abortus).